The sequence spans 418 residues: MWCRRLACLLSVPCQHTRHRLLGPSCGRRTFTAAVARWHHTAPESLSCAWQLHGDHLELRYADTLMRFDFVWLRDHCRSASCYNAKTNQRSLDTASVDLSIKPKAVRVDETTLFLTWPDGHVTRYGLQWLVKNSYEGQKQQVMHPRILWNAEIYRQAQVPSVDCQSFLETDEGLKEFLQNFLLYGIAFVENVTPTKEDTQILAERISLIRETIYGRMWYFTSDFSRGDTAYTKLALDRHTDTTYFQEPCGIQVFHCLKHEGTGGRTLLVDGFYAAEQVLRQAPDQFELLSKVPLKHEYIENVGDCHNHMIGVGPVLNVYPWNNELYLIRYNNYDRAVINTVPYDVVNRWYTAHRTLTTELRRPENELWVKLKPGKALFIDNWRVLHGREAFTGYRQLCGCYLTRDDVLNTARLLGLQA.

3 residues coordinate Fe cation: histidine 239, aspartate 241, and histidine 386.

It belongs to the gamma-BBH/TMLD family. In terms of assembly, homodimer. It depends on Fe(2+) as a cofactor. L-ascorbate serves as cofactor.

Its subcellular location is the mitochondrion matrix. It carries out the reaction N(6),N(6),N(6)-trimethyl-L-lysine + 2-oxoglutarate + O2 = (3S)-3-hydroxy-N(6),N(6),N(6)-trimethyl-L-lysine + succinate + CO2. Its pathway is amine and polyamine biosynthesis; carnitine biosynthesis. Functionally, converts trimethyllysine (TML) into hydroxytrimethyllysine (HTML). The polypeptide is Trimethyllysine dioxygenase, mitochondrial (TMLHE) (Gallus gallus (Chicken)).